The following is a 262-amino-acid chain: MRIDVITIFPDYLNPLREALLGKAIQRERIAVGVHDLRNWTHDVHRAVDDSPYGGGPGMVMKPDVWGEALDEICGDGTGQVPRLVVPTPAGRPFTQRTAVRWSQEPWLVFACGRYEGIDQRVITDAARRMPVEEVSIGDYVLVGGEVAALTMIEAVVRLLPGVLGNPASAEQDSFSDGLLEGPCYTRPEVWRDQPVPEVLRSGNHAAIARWRRDQSLERTWRRRPELIEALPEGTLDARDREVLDRVRESDHSGDSRSPGSG.

Residues glycine 113 and 137–142 (IGDYVL) each bind S-adenosyl-L-methionine.

It belongs to the RNA methyltransferase TrmD family. In terms of assembly, homodimer.

Its subcellular location is the cytoplasm. It catalyses the reaction guanosine(37) in tRNA + S-adenosyl-L-methionine = N(1)-methylguanosine(37) in tRNA + S-adenosyl-L-homocysteine + H(+). Specifically methylates guanosine-37 in various tRNAs. The sequence is that of tRNA (guanine-N(1)-)-methyltransferase from Saccharopolyspora erythraea (strain ATCC 11635 / DSM 40517 / JCM 4748 / NBRC 13426 / NCIMB 8594 / NRRL 2338).